The sequence spans 163 residues: Putative ribose 5-phosphate isomerase (163 aa).

D-ribulose 5-phosphate is bound at residue 16–17 (DD). C76 serves as the catalytic Proton acceptor. D-ribulose 5-phosphate-binding positions include 77 to 81 (GTGLG), N110, R120, and K148.

Belongs to the LacAB/RpiB family. As to quaternary structure, homodimer or homotetramer.

This chain is Putative ribose 5-phosphate isomerase, found in Coccidioides immitis (strain RS) (Valley fever fungus).